We begin with the raw amino-acid sequence, 386 residues long: MNIHEYQGKAVLRSYGVSVPNGKVAFTVEEAVEAAKELGTEVCVVKAQIHAGGRGKAGGVKVAKNLEEVRTYAESILGTTLVTHQTGPEGKEVKRLLIEEGCDIKKEYYVGLVLDRATSQVVLMASEEGGTEIEEVAEKTPEKIFKEYIDPAVGLQGFQARRIAFNINIPKELVGQAVKFMMGLYSAFIEKDCSIAEINPLVTTGDGKVMALDAKLNFDSNALYRNKDILELRDLEEEDSKEIEASKYDLNYIPLDGNIGCMVNGAGLAMATMDIIKHYHGDPANFLDVGGGATAEKVTEAFKIILSDKNVKGIFVNIFGGIMKCDVIAEGVIEATKQVGLELPLVVRLEGTNVELGKKILNESGLNIVAAESMADGAQKIVSLVG.

One can recognise an ATP-grasp domain in the interval 9–244 (KAVLRSYGVS…LEEEDSKEIE (236 aa)). Residues Lys46, 53-55 (GRG), Glu99, Cys102, and Glu107 contribute to the ATP site. Mg(2+)-binding residues include Asn199 and Asp213. Substrate-binding positions include Asn264 and 321–323 (GIM).

This sequence belongs to the succinate/malate CoA ligase beta subunit family. In terms of assembly, heterotetramer of two alpha and two beta subunits. Requires Mg(2+) as cofactor.

It catalyses the reaction succinate + ATP + CoA = succinyl-CoA + ADP + phosphate. It carries out the reaction GTP + succinate + CoA = succinyl-CoA + GDP + phosphate. It participates in carbohydrate metabolism; tricarboxylic acid cycle; succinate from succinyl-CoA (ligase route): step 1/1. Succinyl-CoA synthetase functions in the citric acid cycle (TCA), coupling the hydrolysis of succinyl-CoA to the synthesis of either ATP or GTP and thus represents the only step of substrate-level phosphorylation in the TCA. The beta subunit provides nucleotide specificity of the enzyme and binds the substrate succinate, while the binding sites for coenzyme A and phosphate are found in the alpha subunit. This is Succinate--CoA ligase [ADP-forming] subunit beta from Bacillus mycoides (strain KBAB4) (Bacillus weihenstephanensis).